A 412-amino-acid chain; its full sequence is MENNTNMFSGVKVIELANFIAAPAAGRFFADGGAEVIKIESPAGDPLRYTAPSEGRPLSQEENTTYDLENANKKAIVLNLKSEKGKKILHEMLAEADILLTNWRTKALVKQGLDYETLKEKYPKLVFAQITGYGEKGPDKDLPGFDYTAFFARGGVSGTLYEKGTVPPNVVPGLGDHQAGMFLAAGMAGALYKAKTTGQGDKVTVSLMHSAMYGLGIMIQAAQYKDHGLVYPINRNETPNPFIVSYKSKDDYFVQVCMPPYDVFYDRFMTALGREDLVGDERYNKIENLKDGRAKEVYSIIEQQMVTKTKDEWDNIFRDADIPFAIAQTWEDLLEDEQAWANDYLYKMKYPTGNERALVRLPVFFKEAGLPEYNQSPQIAENTVEVLKEMGYTEQEIEELEKDKDIMVRKEK.

A CoA-binding site is contributed by N102. The active-site Nucleophile is D176.

In terms of assembly, homodimer. Part of the heterotrimeric phenyllactate dehydratase complex FldABC, composed of (R)-phenyllactate CoA-transferase (FldA) and a heterodimeric (R)-phenyllactyl-CoA dehydratase (FldB and FldC).

The enzyme catalyses (E)-cinnamoyl-CoA + (R)-3-phenyllactate = (R)-3-phenyllactoyl-CoA + (E)-cinnamate. It participates in amino-acid degradation; L-phenylalanine degradation. In terms of biological role, component of the phenyllactate dehydratase complex FldABC that is involved in the fermentation of L-phenylalanine via a Stickland reaction. This complex catalyzes the reversible syn-dehydration of (R)-phenyllactate to (E)-cinnamate in two steps, a CoA-transfer from cinnamoyl-CoA to phenyllactate, catalyzed by FldA, followed by the dehydration of phenyllactyl-CoA to cinnamoyl-CoA, catalyzed by FldB and FldC. In vitro, FldA can use 3-phenylpropanoate as a better CoA-acceptor than phenyllactate. This is Cinnamoyl-CoA:phenyllactate CoA-transferase from Clostridium sporogenes.